A 294-amino-acid chain; its full sequence is ATP phosphoribosyltransferase (294 aa).

It belongs to the ATP phosphoribosyltransferase family. Long subfamily. Mg(2+) is required as a cofactor.

The protein localises to the cytoplasm. The catalysed reaction is 1-(5-phospho-beta-D-ribosyl)-ATP + diphosphate = 5-phospho-alpha-D-ribose 1-diphosphate + ATP. It functions in the pathway amino-acid biosynthesis; L-histidine biosynthesis; L-histidine from 5-phospho-alpha-D-ribose 1-diphosphate: step 1/9. Feedback inhibited by histidine. In terms of biological role, catalyzes the condensation of ATP and 5-phosphoribose 1-diphosphate to form N'-(5'-phosphoribosyl)-ATP (PR-ATP). Has a crucial role in the pathway because the rate of histidine biosynthesis seems to be controlled primarily by regulation of HisG enzymatic activity. The sequence is that of ATP phosphoribosyltransferase from Chlorobium chlorochromatii (strain CaD3).